Here is a 283-residue protein sequence, read N- to C-terminus: MPKVSSVIVPYAAYLRVYEPLAAFPDEERAHWTRYARRPGRPSYQDELRRSLADLLPTPPVAVPVHESADAFVTEVDGVVCVCPWRTRLRGWQALGEVAEDFPEPVLDALIPPVVRRQSAQDYERWLERNPDARPWIRTATWQVPINWFVLVSDAEREYDEGGGDEAATAPVLRYRTPMVQARRRVARGLRALREAVDEGPLIDGLVDVGRWLEEFHPRSLVELDYGGLVHALPAGELEADHSAADVAEGIEALRHGDGVAAGAAYGRLVERWRAVRDRRSAN.

This is an uncharacterized protein from Streptomyces coelicolor (strain ATCC BAA-471 / A3(2) / M145).